Here is a 248-residue protein sequence, read N- to C-terminus: Trihelix transcription factor ENAP2 (248 aa).

Over residues 1 to 13 the composition is skewed to polar residues; it reads METTTPQSKSSVS. The tract at residues 1 to 20 is disordered; that stretch reads METTTPQSKSSVSHRPPLGR. Positions 24 to 113 form a DNA-binding region, MADF; sequence WSEEATATLV…RLDVLIGPVV (90 aa). A Nuclear localization signal motif is present at residues 69–76; the sequence is RKKTDLQC. The interval 123 to 150 is disordered; it reads SAPFKNHLNPTGSNSTGSSLEDDDEDDD. Polar residues predominate over residues 130-141; that stretch reads LNPTGSNSTGSS. Positions 190-210 form a coiled coil; that stretch reads YERIEGKKQQMMIELEKQRME.

Interacts with the Agrobacterium tumefaciens virulence protein F (VirF) in the nucleus. Binds to EIN2 C-terminal region in the presence of ethylene.

The protein localises to the nucleus. It localises to the nucleoplasm. Its function is as follows. Probable transcription regulator. Promotes histone acetylation during ethylene signaling in an EIN2-dependent manner, thus regulating positively ethylene-responsive genes. This is Trihelix transcription factor ENAP2 from Arabidopsis thaliana (Mouse-ear cress).